Reading from the N-terminus, the 265-residue chain is Orotidine 5'-phosphate decarboxylase (265 aa).

Residues D38, 60 to 62, 92 to 101, Y218, and R236 contribute to the substrate site; these read KTH and DRKFADIGKT. The active-site Proton donor is the K94.

It belongs to the OMP decarboxylase family.

It carries out the reaction orotidine 5'-phosphate + H(+) = UMP + CO2. It functions in the pathway pyrimidine metabolism; UMP biosynthesis via de novo pathway; UMP from orotate: step 2/2. This is Orotidine 5'-phosphate decarboxylase (URA3) from Cyberlindnera fabianii (Yeast).